The primary structure comprises 589 residues: uncharacterized protein (589 aa).

The next 5 membrane-spanning stretches (helical) occupy residues 11–31, 57–77, 97–117, 190–210, and 213–233; these read LNWI…TMLA, LILM…FSVL, FWFF…HAIA, IEFT…GFNI, and GVVF…VWIG. In terms of domain architecture, ABC transmembrane type-1 spans 57–357; that stretch reads LILMLLVLFI…FRLFYEQFTL (301 aa). In terms of domain architecture, ABC transporter spans 390 to 587; the sequence is VALKNFGIKD…QLKLDVCLLC (198 aa). 423–430 contacts ATP; it reads GASGTGKT.

Belongs to the ABC transporter superfamily.

It is found in the cell inner membrane. This is an uncharacterized protein from Haemophilus influenzae (strain ATCC 51907 / DSM 11121 / KW20 / Rd).